A 502-amino-acid chain; its full sequence is ATP synthase subunit alpha (502 aa).

Residue 169 to 176 (GDRQTGKT) coordinates ATP.

It belongs to the ATPase alpha/beta chains family. F-type ATPases have 2 components, CF(1) - the catalytic core - and CF(0) - the membrane proton channel. CF(1) has five subunits: alpha(3), beta(3), gamma(1), delta(1), epsilon(1). CF(0) has three main subunits: a(1), b(2) and c(9-12). The alpha and beta chains form an alternating ring which encloses part of the gamma chain. CF(1) is attached to CF(0) by a central stalk formed by the gamma and epsilon chains, while a peripheral stalk is formed by the delta and b chains.

It localises to the cell inner membrane. The catalysed reaction is ATP + H2O + 4 H(+)(in) = ADP + phosphate + 5 H(+)(out). In terms of biological role, produces ATP from ADP in the presence of a proton gradient across the membrane. The alpha chain is a regulatory subunit. The polypeptide is ATP synthase subunit alpha (Trichlorobacter lovleyi (strain ATCC BAA-1151 / DSM 17278 / SZ) (Geobacter lovleyi)).